The sequence spans 392 residues: Histidinol-phosphate aminotransferase 2 (392 aa).

An N6-(pyridoxal phosphate)lysine modification is found at lysine 228.

This sequence belongs to the class-II pyridoxal-phosphate-dependent aminotransferase family. Histidinol-phosphate aminotransferase subfamily. In terms of assembly, homodimer. Pyridoxal 5'-phosphate is required as a cofactor.

It catalyses the reaction L-histidinol phosphate + 2-oxoglutarate = 3-(imidazol-4-yl)-2-oxopropyl phosphate + L-glutamate. Its pathway is amino-acid biosynthesis; L-histidine biosynthesis; L-histidine from 5-phospho-alpha-D-ribose 1-diphosphate: step 7/9. This Nitrosospira multiformis (strain ATCC 25196 / NCIMB 11849 / C 71) protein is Histidinol-phosphate aminotransferase 2.